Reading from the N-terminus, the 382-residue chain is Dual-specificity RNA methyltransferase RlmN (382 aa).

The Proton acceptor role is filled by E96. A Radical SAM core domain is found at 102 to 342 (QGKRGTLCVS…VRTTRGEDID (241 aa)). An intrachain disulfide couples C109 to C345. [4Fe-4S] cluster contacts are provided by C116, C120, and C123. S-adenosyl-L-methionine-binding positions include 170–171 (GE), S202, 224–226 (SLH), and N302. Catalysis depends on C345, which acts as the S-methylcysteine intermediate.

Belongs to the radical SAM superfamily. RlmN family. It depends on [4Fe-4S] cluster as a cofactor.

Its subcellular location is the cytoplasm. It catalyses the reaction adenosine(2503) in 23S rRNA + 2 reduced [2Fe-2S]-[ferredoxin] + 2 S-adenosyl-L-methionine = 2-methyladenosine(2503) in 23S rRNA + 5'-deoxyadenosine + L-methionine + 2 oxidized [2Fe-2S]-[ferredoxin] + S-adenosyl-L-homocysteine. The enzyme catalyses adenosine(37) in tRNA + 2 reduced [2Fe-2S]-[ferredoxin] + 2 S-adenosyl-L-methionine = 2-methyladenosine(37) in tRNA + 5'-deoxyadenosine + L-methionine + 2 oxidized [2Fe-2S]-[ferredoxin] + S-adenosyl-L-homocysteine. In terms of biological role, specifically methylates position 2 of adenine 2503 in 23S rRNA and position 2 of adenine 37 in tRNAs. m2A2503 modification seems to play a crucial role in the proofreading step occurring at the peptidyl transferase center and thus would serve to optimize ribosomal fidelity. The protein is Dual-specificity RNA methyltransferase RlmN of Pseudomonas fluorescens (strain Pf0-1).